A 157-amino-acid polypeptide reads, in one-letter code: dCTP deaminase (157 aa).

DCTP is bound by residues arginine 79–arginine 84, aspartate 95, glutamine 124, and tyrosine 138.

The protein belongs to the dCTP deaminase family. In terms of assembly, homotrimer.

It carries out the reaction dCTP + H2O + H(+) = dUTP + NH4(+). Its pathway is pyrimidine metabolism; dUMP biosynthesis; dUMP from dCTP (dUTP route): step 1/2. Catalyzes the deamination of dCTP to dUTP. The chain is dCTP deaminase from Thermococcus gammatolerans (strain DSM 15229 / JCM 11827 / EJ3).